The chain runs to 286 residues: ATP synthase gamma chain (286 aa).

The protein belongs to the ATPase gamma chain family. In terms of assembly, F-type ATPases have 2 components, CF(1) - the catalytic core - and CF(0) - the membrane proton channel. CF(1) has five subunits: alpha(3), beta(3), gamma(1), delta(1), epsilon(1). CF(0) has three main subunits: a, b and c.

The protein resides in the cell inner membrane. Functionally, produces ATP from ADP in the presence of a proton gradient across the membrane. The gamma chain is believed to be important in regulating ATPase activity and the flow of protons through the CF(0) complex. The polypeptide is ATP synthase gamma chain (Shewanella baltica (strain OS223)).